The sequence spans 359 residues: Cysteine/Cysteine sulfinic acid decarboxylase (359 aa).

The protein in the N-terminal section; belongs to the HFCD (homo-oligomeric flavin containing Cys decarboxylase) superfamily. This sequence in the C-terminal section; belongs to the PPC synthetase family.

It catalyses the reaction L-cysteine + H(+) = cysteamine + CO2. The catalysed reaction is 3-sulfino-L-alanine + H(+) = hypotaurine + CO2. With respect to regulation, slightly stimulated in the presence of 1 mM Mg(2+). Catalyzes the decarboxylation of L-cysteine to cysteamine and of 3-sulfino-L-alanine (cysteine sulfinic acid) to hypotaurine. Also catalyzes the decarboxylation of various amino acids such as L-lysine, L-glutamate, L-asparaginate and L-proline. In vitro, shows highest activity with L-cysteine as substrate. The protein is Cysteine/Cysteine sulfinic acid decarboxylase of Unknown prokaryotic organism.